The chain runs to 500 residues: Glycerol kinase (500 aa).

T12 contacts ADP. T12, T13, and S14 together coordinate ATP. T12 contacts sn-glycerol 3-phosphate. Residue R16 coordinates ADP. 4 residues coordinate sn-glycerol 3-phosphate: R82, E83, Y135, and D245. Glycerol-binding residues include R82, E83, Y135, D245, and Q246. ADP-binding residues include T267 and G310. ATP contacts are provided by T267, G310, Q314, and G411. ADP-binding residues include G411 and N415.

Belongs to the FGGY kinase family. As to quaternary structure, homotetramer and homodimer (in equilibrium).

It catalyses the reaction glycerol + ATP = sn-glycerol 3-phosphate + ADP + H(+). Its pathway is polyol metabolism; glycerol degradation via glycerol kinase pathway; sn-glycerol 3-phosphate from glycerol: step 1/1. Its activity is regulated as follows. Activated by phosphorylation and inhibited by fructose 1,6-bisphosphate (FBP). Functionally, key enzyme in the regulation of glycerol uptake and metabolism. Catalyzes the phosphorylation of glycerol to yield sn-glycerol 3-phosphate. This is Glycerol kinase from Clostridium perfringens (strain 13 / Type A).